The primary structure comprises 204 residues: Large ribosomal subunit protein bL9 (204 aa).

The disordered stretch occupies residues 180 to 204 (DDIGGAASDDEGDAPAAAADEEESK). The segment covering 187 to 204 (SDDEGDAPAAAADEEESK) has biased composition (acidic residues).

It belongs to the bacterial ribosomal protein bL9 family.

In terms of biological role, binds to the 23S rRNA. The polypeptide is Large ribosomal subunit protein bL9 (Ruegeria sp. (strain TM1040) (Silicibacter sp.)).